Here is a 242-residue protein sequence, read N- to C-terminus: DnaJ homolog subfamily B member 6 (242 aa).

The J domain maps to 3–69 (EYYDVLGVQR…KKRDIYDKYG (67 aa)).

In terms of assembly, homooligomer.

The protein localises to the cytoplasm. It localises to the perinuclear region. Its subcellular location is the nucleus. Has a stimulatory effect on the ATPase activity of HSP70 in a dose-dependent and time-dependent manner and hence acts as a co-chaperone of HSP70. Plays an indispensable role in the organization of KRT8/KRT18 filaments. Acts as an endogenous molecular chaperone for neuronal proteins including huntingtin. Suppresses aggregation and toxicity of polyglutamine-containing, aggregation-prone proteins. Also reduces cellular toxicity and caspase-3 activity. This Xenopus tropicalis (Western clawed frog) protein is DnaJ homolog subfamily B member 6.